We begin with the raw amino-acid sequence, 381 residues long: O-phospho-L-seryl-tRNA:Cys-tRNA synthase (381 aa).

Pyridoxal 5'-phosphate-binding positions include 86-87 (AR), N192, and 215-217 (SGH). An N6-(pyridoxal phosphate)lysine modification is found at K218.

This sequence belongs to the SepCysS family. Homodimer. Interacts with SepRS. It depends on pyridoxal 5'-phosphate as a cofactor.

The catalysed reaction is O-phospho-L-seryl-tRNA(Cys) + hydrogen sulfide + H(+) = L-cysteinyl-tRNA(Cys) + phosphate. In terms of biological role, converts O-phospho-L-seryl-tRNA(Cys) (Sep-tRNA(Cys)) to L-cysteinyl-tRNA(Cys) (Cys-tRNA(Cys)). The chain is O-phospho-L-seryl-tRNA:Cys-tRNA synthase from Methanococcus vannielii (strain ATCC 35089 / DSM 1224 / JCM 13029 / OCM 148 / SB).